Consider the following 227-residue polypeptide: PKHD-type hydroxylase BamMC406_5004 (227 aa).

Residues 80–179 enclose the Fe2OG dioxygenase domain; that stretch reads QVYPPLFNRY…RVASFFWVQS (100 aa). 3 residues coordinate Fe cation: His98, Asp100, and His160. Residue Arg170 coordinates 2-oxoglutarate.

Requires Fe(2+) as cofactor. It depends on L-ascorbate as a cofactor.

This is PKHD-type hydroxylase BamMC406_5004 from Burkholderia ambifaria (strain MC40-6).